Reading from the N-terminus, the 205-residue chain is Phosphoheptose isomerase (205 aa).

Residues 38–200 (LAVRLALGSK…LFEAVGELEP (163 aa)) enclose the SIS domain. 53–55 (NGG) serves as a coordination point for substrate. 2 residues coordinate Zn(2+): H62 and E66. Residues E66, 95–96 (ND), 121–123 (STS), S126, and Q173 each bind substrate. Residues Q173 and H181 each contribute to the Zn(2+) site.

Belongs to the SIS family. GmhA subfamily. Homotetramer. Zn(2+) is required as a cofactor.

Its subcellular location is the cytoplasm. It carries out the reaction 2 D-sedoheptulose 7-phosphate = D-glycero-alpha-D-manno-heptose 7-phosphate + D-glycero-beta-D-manno-heptose 7-phosphate. The protein operates within carbohydrate biosynthesis; D-glycero-D-manno-heptose 7-phosphate biosynthesis; D-glycero-alpha-D-manno-heptose 7-phosphate and D-glycero-beta-D-manno-heptose 7-phosphate from sedoheptulose 7-phosphate: step 1/1. Functionally, catalyzes the isomerization of sedoheptulose 7-phosphate in D-glycero-D-manno-heptose 7-phosphate. The protein is Phosphoheptose isomerase of Maridesulfovibrio salexigens (strain ATCC 14822 / DSM 2638 / NCIMB 8403 / VKM B-1763) (Desulfovibrio salexigens).